The primary structure comprises 501 residues: V-type proton ATPase subunit B 2 (501 aa).

Arg392 is a binding site for ATP.

It belongs to the ATPase alpha/beta chains family. V-ATPase is a heteromultimeric enzyme made up of two complexes: the ATP-hydrolytic V1 complex and the proton translocation V0 complex. The V1 complex consists of three catalytic AB heterodimers that form a heterohexamer, three peripheral stalks each consisting of EG heterodimers, one central rotor including subunits D and F, and the regulatory subunits C and H. The proton translocation complex V0 consists of the proton transport subunit a, a ring of proteolipid subunits c9c'', rotary subunit d, subunits e and f, and the accessory subunits vah-19/Ac45 and vah-20/PRR. Predominantly expressed in male and hermaphrodite testis (at protein level).

The protein resides in the cytoplasm. Non-catalytic subunit of the V1 complex of vacuolar(H+)-ATPase (V-ATPase), a multisubunit enzyme composed of a peripheral complex (V1) that hydrolyzes ATP and a membrane integral complex (V0) that translocates protons. V-ATPase is responsible for acidifying and maintaining the pH of intracellular compartments and in some cell types, is targeted to the plasma membrane, where it is responsible for acidifying the extracellular environment. In neurons, required for necrotic cell death probably by promoting intracellular acidification. Required for spermatogenesis where it regulates the fibrous body-membranous organelle (FBMO) morphology in spermatocytes and the acidification of FBMO-derived secretory membranous organelles (MOs) as spermatids mature. The protein is V-type proton ATPase subunit B 2 of Caenorhabditis elegans.